Here is a 164-residue protein sequence, read N- to C-terminus: Protein-export protein SecB (164 aa).

The protein belongs to the SecB family. As to quaternary structure, homotetramer, a dimer of dimers. One homotetramer interacts with 1 SecA dimer.

The protein resides in the cytoplasm. In terms of biological role, one of the proteins required for the normal export of preproteins out of the cell cytoplasm. It is a molecular chaperone that binds to a subset of precursor proteins, maintaining them in a translocation-competent state. It also specifically binds to its receptor SecA. In Nitrosococcus oceani (strain ATCC 19707 / BCRC 17464 / JCM 30415 / NCIMB 11848 / C-107), this protein is Protein-export protein SecB.